Reading from the N-terminus, the 453-residue chain is Retroviral integration site protein Fli-1 homolog (453 aa).

The region spanning 111–197 is the PNT domain; it reads PPPPNMTTNE…SHLNYLRDSS (87 aa). The span at 201 to 214 shows a compositional bias: polar residues; that stretch reads GYNTQAHTDQSSRL. The tract at residues 201–273 is disordered; it reads GYNTQAHTDQ…YQILGPTSSR (73 aa). Residues 215–226 are compositionally biased toward basic and acidic residues; it reads TAKEDPSYEAVR. 2 stretches are compositionally biased toward polar residues: residues 230-239 and 246-273; these read WGNSMSSPVT and GTQN…TSSR. A DNA-binding region (ETS) is located at residues 282 to 362; sequence IQLWQFLLEL…HGKRYAYKFD (81 aa).

Belongs to the ETS family.

The protein localises to the nucleus. The protein is Retroviral integration site protein Fli-1 homolog (fli1) of Xenopus laevis (African clawed frog).